Here is a 322-residue protein sequence, read N- to C-terminus: Lymphokine-activated killer T-cell-originated protein kinase (322 aa).

Met1 bears the N-acetylmethionine mark. Residues Thr9 and Thr24 each carry the phosphothreonine modification. Ser32 is modified (phosphoserine). One can recognise a Protein kinase domain in the interval Ser32 to Val322. Leu38 to Val46 is a binding site for ATP. The residue at position 59 (Ser59) is a Phosphoserine. Residue Lys64 participates in ATP binding. The Proton acceptor role is filled by Asp167. Lys169 participates in a covalent cross-link: Glycyl lysine isopeptide (Lys-Gly) (interchain with G-Cter in SUMO2). The PDZ-interaction stretch occupies residues Thr320 to Val322.

Belongs to the protein kinase superfamily. STE Ser/Thr protein kinase family. MAP kinase kinase subfamily. Interacts with DLG1 and TP53. Phosphorylated; in a cell-cycle dependent manner at mitosis. Expressed in the testis and placenta. In the testis, restrictedly expressed in outer cell layer of seminiferous tubules.

It carries out the reaction L-seryl-[protein] + ATP = O-phospho-L-seryl-[protein] + ADP + H(+). The catalysed reaction is L-threonyl-[protein] + ATP = O-phospho-L-threonyl-[protein] + ADP + H(+). The enzyme catalyses L-tyrosyl-[protein] + ATP = O-phospho-L-tyrosyl-[protein] + ADP + H(+). With respect to regulation, activated by phosphorylation. Phosphorylates MAP kinase p38. Seems to be active only in mitosis. May also play a role in the activation of lymphoid cells. When phosphorylated, forms a complex with TP53, leading to TP53 destabilization and attenuation of G2/M checkpoint during doxorubicin-induced DNA damage. The protein is Lymphokine-activated killer T-cell-originated protein kinase (PBK) of Homo sapiens (Human).